A 72-amino-acid polypeptide reads, in one-letter code: MVPLKISTLESQLQPLVKLVATETPGALVAYARGLSSADRSRLYRLLRSLEQAIPKLSSAVVSATTLAARGL.

Its subcellular location is the virion membrane. The protein is Protein P13 (P13) of Pseudomonas phage phi6 (Bacteriophage phi-6).